The chain runs to 1136 residues: Nucleoporin nup120 (1136 aa).

Component of the npc107-120 complex which consists of nup85, nup107, nup120, nup131, nup132 and seh1. Interacts with nup107.

It is found in the nucleus. In terms of biological role, functions as a component of the nuclear pore complex (NPC). NPC components, collectively referred to as nucleoporins (NUPs), can play the role of both NPC structural components and of docking or interaction partners for transiently associated nuclear transport factors. Active directional transport is assured by both, a Phe-Gly (FG) repeat affinity gradient for these transport factors across the NPC and a transport cofactor concentration gradient across the nuclear envelope. This chain is Nucleoporin nup120 (nup120), found in Schizosaccharomyces pombe (strain 972 / ATCC 24843) (Fission yeast).